Here is a 227-residue protein sequence, read N- to C-terminus: Cytochrome c oxidase subunit 2 (227 aa).

Over 1 to 14 the chain is Mitochondrial intermembrane; that stretch reads MAYPFELGFQDATS. Residues 15-45 form a helical membrane-spanning segment; it reads PIMEELLHFHDHTLMIVFLISSLVLYIISLM. At 46-59 the chain is on the mitochondrial matrix side; sequence LTTKLTHTSTMDAQ. A helical transmembrane segment spans residues 60 to 87; the sequence is EVETIWTILPAIILILIALPSLRVLYMM. Over 88–227 the chain is Mitochondrial intermembrane; sequence DEINDPSLTV…HFENWSSSML (140 aa). Residues His161, Cys196, Glu198, Cys200, His204, and Met207 each contribute to the Cu cation site. Glu198 is a Mg(2+) binding site.

This sequence belongs to the cytochrome c oxidase subunit 2 family. Component of the cytochrome c oxidase (complex IV, CIV), a multisubunit enzyme composed of 14 subunits. The complex is composed of a catalytic core of 3 subunits MT-CO1, MT-CO2 and MT-CO3, encoded in the mitochondrial DNA, and 11 supernumerary subunits COX4I, COX5A, COX5B, COX6A, COX6B, COX6C, COX7A, COX7B, COX7C, COX8 and NDUFA4, which are encoded in the nuclear genome. The complex exists as a monomer or a dimer and forms supercomplexes (SCs) in the inner mitochondrial membrane with NADH-ubiquinone oxidoreductase (complex I, CI) and ubiquinol-cytochrome c oxidoreductase (cytochrome b-c1 complex, complex III, CIII), resulting in different assemblies (supercomplex SCI(1)III(2)IV(1) and megacomplex MCI(2)III(2)IV(2)). Found in a complex with TMEM177, COA6, COX18, COX20, SCO1 and SCO2. Interacts with TMEM177 in a COX20-dependent manner. Interacts with COX20. Interacts with COX16. The cofactor is Cu cation.

The protein localises to the mitochondrion inner membrane. It catalyses the reaction 4 Fe(II)-[cytochrome c] + O2 + 8 H(+)(in) = 4 Fe(III)-[cytochrome c] + 2 H2O + 4 H(+)(out). Functionally, component of the cytochrome c oxidase, the last enzyme in the mitochondrial electron transport chain which drives oxidative phosphorylation. The respiratory chain contains 3 multisubunit complexes succinate dehydrogenase (complex II, CII), ubiquinol-cytochrome c oxidoreductase (cytochrome b-c1 complex, complex III, CIII) and cytochrome c oxidase (complex IV, CIV), that cooperate to transfer electrons derived from NADH and succinate to molecular oxygen, creating an electrochemical gradient over the inner membrane that drives transmembrane transport and the ATP synthase. Cytochrome c oxidase is the component of the respiratory chain that catalyzes the reduction of oxygen to water. Electrons originating from reduced cytochrome c in the intermembrane space (IMS) are transferred via the dinuclear copper A center (CU(A)) of subunit 2 and heme A of subunit 1 to the active site in subunit 1, a binuclear center (BNC) formed by heme A3 and copper B (CU(B)). The BNC reduces molecular oxygen to 2 water molecules using 4 electrons from cytochrome c in the IMS and 4 protons from the mitochondrial matrix. The polypeptide is Cytochrome c oxidase subunit 2 (MT-CO2) (Sciurus carolinensis (Eastern gray squirrel)).